A 360-amino-acid polypeptide reads, in one-letter code: MKTWVIKIGTSILRGTEETSTEEVIENLSRSFTSFLSKGNKLILVTSGAVGLGCQKLNIKTRPNDLSTLQATAAVGQVNLMSLYDKVFNKLGLNIAQILITKADFNSRESFNNASKTLKRLIDLNVIPIVNENDTVANEELKYGDNDTLSALVALAINANKLILLTDIENLYSKDPRNNKDAQPIKEVHNSELKEIKDKNIQNSNNEWGTGGISTKLISAEIATKGGVEVQLVDGTNKKNLIEIFNDNKIGTLFYPVEKPIGNKKSWLSHAIQTVGKITLDDGASFAIKKKGASLLAVGVKNVEGNFTINQAVKIVNTNDKEVAKGLVSISSDKLRSILNNKENNNSSIIVVHRDVLALS.

Lysine 7 is an ATP binding site. Positions 47, 134, and 146 each coordinate substrate. Residues 166–167 and 210–216 each bind ATP; these read TD and TGGISTK. Residues 275–356 form the PUA domain; it reads VGKITLDDGA…SSIIVVHRDV (82 aa).

It belongs to the glutamate 5-kinase family.

The protein resides in the cytoplasm. It carries out the reaction L-glutamate + ATP = L-glutamyl 5-phosphate + ADP. Its pathway is amino-acid biosynthesis; L-proline biosynthesis; L-glutamate 5-semialdehyde from L-glutamate: step 1/2. Functionally, catalyzes the transfer of a phosphate group to glutamate to form L-glutamate 5-phosphate. The sequence is that of Glutamate 5-kinase from Prochlorococcus marinus (strain MIT 9301).